The chain runs to 473 residues: Xylan O-acetyltransferase 14 (473 aa).

The segment covering Met1–Thr17 has biased composition (polar residues). A disordered region spans residues Met1–Gly22. Over Met1 to His54 the chain is Cytoplasmic. A helical; Signal-anchor for type II membrane protein membrane pass occupies residues Phe55–Thr75. The segment at Lys76 to Ser101 is disordered. At Lys76–Ser473 the chain is on the lumenal side. 4 disulfides stabilise this stretch: Cys108–Cys159, Cys130–Cys195, Cys139–Cys455, and Cys370–Cys451. The short motif at Gly182 to Ser184 is the GDS motif element. Catalysis depends on Ser184, which acts as the Nucleophile. 3 N-linked (GlcNAc...) asparagine glycosylation sites follow: Asn209, Asn223, and Asn414. Asp450 serves as the catalytic Proton donor. The DXXH motif signature appears at Asp450–His453. The active-site Proton acceptor is His453.

Belongs to the PC-esterase family. TBL subfamily.

The protein resides in the golgi apparatus membrane. Xylan acetyltransferase required for 2-O- and 3-O-monoacetylation of xylosyl residues in xylan. Catalyzes the 2-O-acetylation of xylan, followed by nonenzymatic acetyl migration to the O-3 position, resulting in products that are monoacetylated at both O-2 and O-3 positions. The sequence is that of Xylan O-acetyltransferase 14 from Oryza sativa subsp. japonica (Rice).